The chain runs to 222 residues: Physcion biosynthesis cluster O-methyltransferase (222 aa).

It belongs to the methyltransferase superfamily.

The catalysed reaction is emodin + S-adenosyl-L-methionine = physcion + S-adenosyl-L-homocysteine. It functions in the pathway secondary metabolite biosynthesis. O-methyltransferase; part of the gene cluster that mediates the biosynthesis of physcion, a natural anthraquinone fungicide that can prevent plant fungal infections. Within the pathway, the O-methyltransferase AcOMT catalyzes the last step by transferring a methyl group to C-6 hydroxyl of emodin to form physcion. AcOMT may also methylate the C-6 hydroxyl group of emodin anthrone to produce physcion-anthrone B. The pathway begins with the polyketide synthase AcPKS that condenses 8 malonyl-CoA units to synthesize atrochrysone thioester which is released from the synthase by the atrochrysone carboxyl ACP thioesterase AcTE that breaks the thioester bond and leads to free atrochrysone carboxylic acid. Spontaneous decarboxylation of atrochrysone carboxylic acid leads to the formation of atrochrysone. Then, atrochrysone undergoes spontaneous dehydration and oxidation, giving the products emodin anthrone and emodin. The O-methyltransferase AcOMT then methylates the C-6 hydroxyl of emodin to form physcion. The polypeptide is Physcion biosynthesis cluster O-methyltransferase (Aspergillus chevalieri (Eurotium chevalieri)).